The chain runs to 102 residues: Small ribosomal subunit protein uS10 (102 aa).

It belongs to the universal ribosomal protein uS10 family. As to quaternary structure, part of the 30S ribosomal subunit.

Functionally, involved in the binding of tRNA to the ribosomes. The chain is Small ribosomal subunit protein uS10 from Kineococcus radiotolerans (strain ATCC BAA-149 / DSM 14245 / SRS30216).